The following is a 480-amino-acid chain: Glutamyl-tRNA(Gln) amidotransferase subunit A (480 aa).

Active-site charge relay system residues include Lys-74 and Ser-149. Catalysis depends on Ser-173, which acts as the Acyl-ester intermediate.

Belongs to the amidase family. GatA subfamily. Heterotrimer of A, B and C subunits.

The catalysed reaction is L-glutamyl-tRNA(Gln) + L-glutamine + ATP + H2O = L-glutaminyl-tRNA(Gln) + L-glutamate + ADP + phosphate + H(+). Its function is as follows. Allows the formation of correctly charged Gln-tRNA(Gln) through the transamidation of misacylated Glu-tRNA(Gln) in organisms which lack glutaminyl-tRNA synthetase. The reaction takes place in the presence of glutamine and ATP through an activated gamma-phospho-Glu-tRNA(Gln). The polypeptide is Glutamyl-tRNA(Gln) amidotransferase subunit A (Prochlorococcus marinus (strain MIT 9312)).